A 118-amino-acid chain; its full sequence is Acidic phospholipase A2 homolog (118 aa).

Cystine bridges form between C11–C70, C25–C117, C27–C43, C42–C98, C49–C91, C59–C84, and C77–C89.

This sequence belongs to the phospholipase A2 family. Group I subfamily. A49 sub-subfamily. In terms of tissue distribution, expressed by the venom gland.

The protein localises to the secreted. Functionally, snake venom phospholipase A2 (PLA2) homolog that lacks both catalytic and neurotoxicity activities. The chain is Acidic phospholipase A2 homolog from Bungarus fasciatus (Banded krait).